The sequence spans 368 residues: Ubiquitin domain-containing protein UBFD1 (368 aa).

Positions 106–139 (SCDARGNLQPAPAQPPGDPAAQASVSNGEDAGGG) are disordered. A Ubiquitin-like domain is found at 143 to 218 (ELVDLKIIWN…IMVVGSTIND (76 aa)). Residues 231 to 263 (QDAKAEENKKEPLCRQKQHRKVLDKGKPEDVMP) form a disordered region. Basic and acidic residues-rich tracts occupy residues 233–244 (AKAEENKKEPLC) and 251–260 (KVLDKGKPED).

This chain is Ubiquitin domain-containing protein UBFD1 (Ubfd1), found in Mus musculus (Mouse).